A 308-amino-acid polypeptide reads, in one-letter code: Porphobilinogen deaminase (308 aa).

S-(dipyrrolylmethanemethyl)cysteine is present on C240.

It belongs to the HMBS family. In terms of assembly, monomer. The cofactor is dipyrromethane.

It carries out the reaction 4 porphobilinogen + H2O = hydroxymethylbilane + 4 NH4(+). The protein operates within porphyrin-containing compound metabolism; protoporphyrin-IX biosynthesis; coproporphyrinogen-III from 5-aminolevulinate: step 2/4. Its function is as follows. Tetrapolymerization of the monopyrrole PBG into the hydroxymethylbilane pre-uroporphyrinogen in several discrete steps. In Desulfitobacterium hafniense (strain DSM 10664 / DCB-2), this protein is Porphobilinogen deaminase.